Consider the following 188-residue polypeptide: MKIGVSGIQGDFREHKVMLEKLGVDVKVVRKPEELDEVDGLVIPGGESTTMIRIMKMVNLYEKLKQKIKEGFPVFGTCAGMILLSKEVVNFPQDSLGVIDIKVERNAYGRQVDSFEEQIEVKGFEKTFNAIFIRAPKVVDYGENVEVLATYMDSPVLLRQNNVLVASFHPELTEDTRIHEYFLNMVKK.

46-48 contacts L-glutamine; it reads GES. Cysteine 78 (nucleophile) is an active-site residue. L-glutamine contacts are provided by residues arginine 105 and 133-134; that span reads IR. Active-site charge relay system residues include histidine 169 and glutamate 171.

It belongs to the glutaminase PdxT/SNO family. In terms of assembly, in the presence of PdxS, forms a dodecamer of heterodimers. Only shows activity in the heterodimer.

The enzyme catalyses aldehydo-D-ribose 5-phosphate + D-glyceraldehyde 3-phosphate + L-glutamine = pyridoxal 5'-phosphate + L-glutamate + phosphate + 3 H2O + H(+). It carries out the reaction L-glutamine + H2O = L-glutamate + NH4(+). Its pathway is cofactor biosynthesis; pyridoxal 5'-phosphate biosynthesis. Functionally, catalyzes the hydrolysis of glutamine to glutamate and ammonia as part of the biosynthesis of pyridoxal 5'-phosphate. The resulting ammonia molecule is channeled to the active site of PdxS. The protein is Pyridoxal 5'-phosphate synthase subunit PdxT of Thermosipho africanus (strain TCF52B).